A 1357-amino-acid chain; its full sequence is MAYSYTEKKRIRKDFSKLPDVMDVPYLLAIQLDSYREFLQAGATKEQFRDVGLHAAFKSVFPIISYSGNAALEYVGYRLGEPAFDVKECVLRGVTFAVPLRVKVRLIIFDRESSNKAIKDIKEQEVYMGEIPLMTENGTFIINGTERVIVSQLHRSPGVFFDHDRGKTHSSGKLLYSARIIPYRGSWLDFEFDPKDCVFVRIDRRRKLPASVLLRALGYSTEEILNAFYATNVFHIKGETLNLELVPQRLRGEVASIDIKDGSGKVIVEQGRRITARHINQLEKAGVSQLEVPFDYLIGRTIAKAIVHPATGEIIAECNTELTLDLLAKVAKAQVVRIETLYTNDIDCGPFISDTLKIDNTSNQLEALVEIYRMMRPGEPPTKEAAETLFGNLFFSAERYDLSAVGRMKFNRRIGRTEIEGPGVLSKEDIIDVLKTLVDIRNGKGIVDDIDHLGNRRVRCVGEMAENQFRVGLVRVERAVKERLSMAESEGLMPQDLINAKPVAAAIKEFFGSSQLSQFMDQNNPLSEITHKRRVSALGPGGLTRERAGFEVRDVHPTHYGRVCPIETPEGPNIGLINSLATYARTNKYGFLESPYRVVKDSLVTDEIVFLSAIEEADHVIAQASATLNEKGQLVDELVAVRHLNEFTVKAPEDVTLMDVSPKQVVSVAASLIPFLEHDDANRALMGSNMQRQAVPTLRADKPLVGTGMERNVARDSGVCVVARRGGVIDSVDASRVVVRVADDEVETGEAGVDIYNLTKYTRSNQNTCINQRPLVSKGDVVARGDILADGPSTDMGELALGQNMRVAFMPWNGFNFEDSICLSERVVQEDRFTTIHIQELTCVARDTKLGPEEITADIPNVGEAALNKLDEAGIVYVGAEVQAGDILVGKVTPKGETQLTPEEKLLRAIFGEKASDVKDTSLRVPTGTKGTVIDVQVFTRDGVERDSRALSIEKMQLDQIRKDLNEEFRIVEGATFERLRAALVGAKAEGGPALKKGTEITDDYLDGLERGQWFKLRMADDALNEQLEKAQAYISDRRQLLDDKFEDKKRKLQQGDDLAPGVLKIVKVYLAIKRRIQPGDKMAGRHGNKGVVSVIMPVEDMPHDANGTPVDIVLNPLGVPSRMNVGQILETHLGLAAKGLGEKINRMLEEQRKVAELRKFLHEIYNEIGGREENLDELGDNEILALAKNLRGGVPMATPVFDGAKEREIKAMLKLADLPESGQMRLFDGRTGNQFERPTTVGYMYMLKLNHLVDDKMHARSTGSYSLVTQQPLGGKAQFGGQRFGEMEVWALEAYGAAYTLQEMLTVKSDDVNGRTKMYKNIVDGDHRMEAGMPESFNVLIKEIRSLGIDIELETE.

It belongs to the RNA polymerase beta chain family. The RNAP catalytic core consists of 2 alpha, 1 beta, 1 beta' and 1 omega subunit. When a sigma factor is associated with the core the holoenzyme is formed, which can initiate transcription.

It carries out the reaction RNA(n) + a ribonucleoside 5'-triphosphate = RNA(n+1) + diphosphate. Functionally, DNA-dependent RNA polymerase catalyzes the transcription of DNA into RNA using the four ribonucleoside triphosphates as substrates. In Pseudomonas aeruginosa (strain ATCC 15692 / DSM 22644 / CIP 104116 / JCM 14847 / LMG 12228 / 1C / PRS 101 / PAO1), this protein is DNA-directed RNA polymerase subunit beta.